A 266-amino-acid chain; its full sequence is Phosphatidylserine decarboxylase proenzyme (266 aa).

Active-site charge relay system; for autoendoproteolytic cleavage activity residues include D74, H135, and S237. Catalysis depends on S237, which acts as the Schiff-base intermediate with substrate; via pyruvic acid; for decarboxylase activity. S237 bears the Pyruvic acid (Ser); by autocatalysis mark.

The protein belongs to the phosphatidylserine decarboxylase family. PSD-B subfamily. Prokaryotic type I sub-subfamily. Heterodimer of a large membrane-associated beta subunit and a small pyruvoyl-containing alpha subunit. It depends on pyruvate as a cofactor. Is synthesized initially as an inactive proenzyme. Formation of the active enzyme involves a self-maturation process in which the active site pyruvoyl group is generated from an internal serine residue via an autocatalytic post-translational modification. Two non-identical subunits are generated from the proenzyme in this reaction, and the pyruvate is formed at the N-terminus of the alpha chain, which is derived from the carboxyl end of the proenzyme. The autoendoproteolytic cleavage occurs by a canonical serine protease mechanism, in which the side chain hydroxyl group of the serine supplies its oxygen atom to form the C-terminus of the beta chain, while the remainder of the serine residue undergoes an oxidative deamination to produce ammonia and the pyruvoyl prosthetic group on the alpha chain. During this reaction, the Ser that is part of the protease active site of the proenzyme becomes the pyruvoyl prosthetic group, which constitutes an essential element of the active site of the mature decarboxylase.

The protein resides in the cell membrane. It catalyses the reaction a 1,2-diacyl-sn-glycero-3-phospho-L-serine + H(+) = a 1,2-diacyl-sn-glycero-3-phosphoethanolamine + CO2. Its pathway is phospholipid metabolism; phosphatidylethanolamine biosynthesis; phosphatidylethanolamine from CDP-diacylglycerol: step 2/2. Catalyzes the formation of phosphatidylethanolamine (PtdEtn) from phosphatidylserine (PtdSer). This Campylobacter jejuni subsp. jejuni serotype O:2 (strain ATCC 700819 / NCTC 11168) protein is Phosphatidylserine decarboxylase proenzyme.